A 392-amino-acid polypeptide reads, in one-letter code: Phospho-N-acetylmuramoyl-pentapeptide-transferase (392 aa).

11 consecutive transmembrane segments (helical) span residues 24 to 44, 76 to 96, 100 to 120, 137 to 157, 170 to 190, 193 to 213, 225 to 245, 262 to 282, 289 to 309, 314 to 334, and 369 to 389; these read YLTMRAVMAALTALVIGLLAG, TMGGALILLSIAVSTLLWFDL, FVWIVLLVTLGFGTIGWVDDW, YFWQSVIGLLAALYLVFCISE, WVQSGFALDLPPKAGLLVPFF, VSYPLGVLGFVIMTYLVIVGA, GLAIMPVIMVGSALGIFAYVT, SGELLVYCAAMAGAGLAFLWF, VFMGDVGALALGASLGTIAVI, IVLAIMGGIFVVEALSVMLQV, and QVVIRFWIITMLLCLLGLSTL.

It belongs to the glycosyltransferase 4 family. MraY subfamily. Mg(2+) is required as a cofactor.

It localises to the cell inner membrane. The catalysed reaction is UDP-N-acetyl-alpha-D-muramoyl-L-alanyl-gamma-D-glutamyl-meso-2,6-diaminopimeloyl-D-alanyl-D-alanine + di-trans,octa-cis-undecaprenyl phosphate = di-trans,octa-cis-undecaprenyl diphospho-N-acetyl-alpha-D-muramoyl-L-alanyl-D-glutamyl-meso-2,6-diaminopimeloyl-D-alanyl-D-alanine + UMP. It participates in cell wall biogenesis; peptidoglycan biosynthesis. Catalyzes the initial step of the lipid cycle reactions in the biosynthesis of the cell wall peptidoglycan: transfers peptidoglycan precursor phospho-MurNAc-pentapeptide from UDP-MurNAc-pentapeptide onto the lipid carrier undecaprenyl phosphate, yielding undecaprenyl-pyrophosphoryl-MurNAc-pentapeptide, known as lipid I. In Delftia acidovorans (strain DSM 14801 / SPH-1), this protein is Phospho-N-acetylmuramoyl-pentapeptide-transferase.